A 126-amino-acid polypeptide reads, in one-letter code: Glycine cleavage system H protein (126 aa).

Positions 22 to 104 (IATVGITAFA…YGRGWLFKVE (83 aa)) constitute a Lipoyl-binding domain. Lysine 63 is modified (N6-lipoyllysine).

The protein belongs to the GcvH family. The glycine cleavage system is composed of four proteins: P, T, L and H. (R)-lipoate serves as cofactor.

The glycine cleavage system catalyzes the degradation of glycine. The H protein shuttles the methylamine group of glycine from the P protein to the T protein. This chain is Glycine cleavage system H protein, found in Thermobifida fusca (strain YX).